We begin with the raw amino-acid sequence, 1463 residues long: Gag-Pol polyprotein (1463 aa).

A lipid anchor (N-myristoyl glycine; by host) is attached at glycine 2. The segment at 7-31 (VLRGKKADELEKIRLRPGGKKKYRL) is interaction with Gp41. A Nuclear export signal motif is present at residues 16–22 (LEKIRLR). A Nuclear localization signal motif is present at residues 26 to 32 (KKKYRLK). The segment at 112–138 (TKTTEKMPSTSRPTAPPSGNGGNFPVQ) is disordered. The interval 191 to 228 (NCVGDHQAAMQIIREIINEEAADWDAQHPIPGPLPAGQ) is interaction with human PPIA/CYPA and NUP153. The dimerization/Multimerization of capsid protein p24 stretch occupies residues 279–365 (YNPTNILDIK…GGPGQKARLM (87 aa)). 2 CCHC-type zinc fingers span residues 389–406 (IKCWNCGKEGHSARQCRA) and 410–427 (QGCWKCGKAGHIMAKCPE). The segment at 441-508 (EAPQFPCGPN…TRDTMQRDDR (68 aa)) is disordered. A compositionally biased stretch (basic and acidic residues) spans 462–508 (RPSRGPTREVHAAREKAERAEREAIQRSDRGLPAARETRDTMQRDDR). Positions 513-517 (PQFSL) are dimerization of protease. In terms of domain architecture, Peptidase A2 spans 532 to 601 (VEVLLDTGAD…TPINIFGRNI (70 aa)). Aspartate 537 serves as the catalytic For protease activity; shared with dimeric partner. 2 dimerization of protease regions span residues 561–567 (GIGGFIN) and 600–612 (NILTALGMSLNLP). Positions 655 to 845 (EGQLEEAPPT…PPYQWMGYEL (191 aa)) constitute a Reverse transcriptase domain. Residues aspartate 721, aspartate 796, and aspartate 797 each coordinate Mg(2+). The interval 838 to 846 (YQWMGYELW) is RT 'primer grip'. The short motif at 1008–1024 (WEQWWDNYWQVTWIPDW) is the Tryptophan repeat motif element. Residues 1044–1167 (ILGAETFYTD…VDHLVSQGIR (124 aa)) form the RNase H type-1 domain. Aspartate 1053, glutamate 1088, aspartate 1108, and aspartate 1159 together coordinate Mg(2+). The segment at 1173–1214 (EKIEPAQEEHEKYHSNVKELSHKFGLPKLVARQIVNTCTQCQ) adopts an Integrase-type zinc-finger fold. Histidine 1182, histidine 1186, cysteine 1210, and cysteine 1213 together coordinate Zn(2+). An Integrase catalytic domain is found at 1223-1374 (QVNAELGTWQ…TPAERLINMV (152 aa)). Residues aspartate 1234, aspartate 1286, and glutamate 1322 each coordinate Mg(2+). Positions 1393–1440 (FRVYFREGRDQLWKGPGELLWKGDGAVIVKVGADIKIIPRRKAKIIKD) form a DNA-binding region, integrase-type.

As to quaternary structure, homotrimer; further assembles as hexamers of trimers. Interacts with gp41 (via C-terminus). Interacts with host CALM1; this interaction induces a conformational change in the Matrix protein, triggering exposure of the myristate group. Interacts with host AP3D1; this interaction allows the polyprotein trafficking to multivesicular bodies during virus assembly. Part of the pre-integration complex (PIC) which is composed of viral genome, matrix protein, Vpr and integrase. Homodimer; the homodimer further multimerizes as homohexamers or homopentamers. Interacts with human PPIA/CYPA. Interacts with human NUP153. Interacts with host PDZD8; this interaction stabilizes the capsid. Interacts with monkey TRIM5; this interaction destabilizes the capsid. In terms of assembly, homodimer, whose active site consists of two apposed aspartic acid residues. As to quaternary structure, heterodimer of p66 RT and p51 RT (RT p66/p51). Heterodimerization of RT is essential for DNA polymerase activity. The overall folding of the subdomains is similar in p66 RT and p51 RT but the spatial arrangements of the subdomains are dramatically different. Homotetramer; may further associate as a homohexadecamer. Part of the pre-integration complex (PIC) which is composed of viral genome, matrix protein, Vpr and integrase. Interacts with human SMARCB1/INI1 and human PSIP1/LEDGF isoform 1. Interacts with human KPNA3; this interaction might play a role in nuclear import of the pre-integration complex. Interacts with human NUP153; this interaction might play a role in nuclear import of the pre-integration complex. It depends on Mg(2+) as a cofactor. Post-translationally, specific enzymatic cleavages by the viral protease yield mature proteins. The protease is released by autocatalytic cleavage. The polyprotein is cleaved during and after budding, this process is termed maturation. Proteolytic cleavage of p66 RT removes the RNase H domain to yield the p51 RT subunit. Nucleocapsid protein p7 might be further cleaved after virus entry.

It localises to the host cell membrane. Its subcellular location is the host endosome. It is found in the host multivesicular body. The protein localises to the virion membrane. The protein resides in the host nucleus. It localises to the host cytoplasm. Its subcellular location is the virion. It carries out the reaction Endopeptidase for which the P1 residue is preferably hydrophobic.. The catalysed reaction is Endohydrolysis of RNA in RNA/DNA hybrids. Three different cleavage modes: 1. sequence-specific internal cleavage of RNA. Human immunodeficiency virus type 1 and Moloney murine leukemia virus enzymes prefer to cleave the RNA strand one nucleotide away from the RNA-DNA junction. 2. RNA 5'-end directed cleavage 13-19 nucleotides from the RNA end. 3. DNA 3'-end directed cleavage 15-20 nucleotides away from the primer terminus.. The enzyme catalyses 3'-end directed exonucleolytic cleavage of viral RNA-DNA hybrid.. It catalyses the reaction DNA(n) + a 2'-deoxyribonucleoside 5'-triphosphate = DNA(n+1) + diphosphate. With respect to regulation, protease: The viral protease is inhibited by many synthetic protease inhibitors (PIs), such as amprenavir, atazanavir, indinavir, loprinavir, nelfinavir, ritonavir and saquinavir. Use of protease inhibitors in tritherapy regimens permit more ambitious therapeutic strategies. Reverse transcriptase/ribonuclease H: RT can be inhibited either by nucleoside RT inhibitors (NRTIs) or by non nucleoside RT inhibitors (NNRTIs). NRTIs act as chain terminators, whereas NNRTIs inhibit DNA polymerization by binding a small hydrophobic pocket near the RT active site and inducing an allosteric change in this region. Classical NRTIs are abacavir, adefovir (PMEA), didanosine (ddI), lamivudine (3TC), stavudine (d4T), tenofovir (PMPA), zalcitabine (ddC), and zidovudine (AZT). Classical NNRTIs are atevirdine (BHAP U-87201E), delavirdine, efavirenz (DMP-266), emivirine (I-EBU), and nevirapine (BI-RG-587). The tritherapies used as a basic effective treatment of AIDS associate two NRTIs and one NNRTI. Its function is as follows. Mediates, with Gag polyprotein, the essential events in virion assembly, including binding the plasma membrane, making the protein-protein interactions necessary to create spherical particles, recruiting the viral Env proteins, and packaging the genomic RNA via direct interactions with the RNA packaging sequence (Psi). Gag-Pol polyprotein may regulate its own translation, by the binding genomic RNA in the 5'-UTR. At low concentration, the polyprotein would promote translation, whereas at high concentration, the polyprotein would encapsidate genomic RNA and then shut off translation. In terms of biological role, targets the polyprotein to the plasma membrane via a multipartite membrane-binding signal, that includes its myristoylated N-terminus. Matrix protein is part of the pre-integration complex. Implicated in the release from host cell mediated by Vpu. Binds to RNA. Forms the conical core that encapsulates the genomic RNA-nucleocapsid complex in the virion. Most core are conical, with only 7% tubular. The core is constituted by capsid protein hexamer subunits. The core is disassembled soon after virion entry. Host restriction factors such as TRIM5-alpha or TRIMCyp bind retroviral capsids and cause premature capsid disassembly, leading to blocks in reverse transcription. Capsid restriction by TRIM5 is one of the factors which restricts HIV-1 to the human species. Host PIN1 apparently facilitates the virion uncoating. On the other hand, interactions with PDZD8 or CYPA stabilize the capsid. Functionally, encapsulates and protects viral dimeric unspliced genomic RNA (gRNA). Binds these RNAs through its zinc fingers. Acts as a nucleic acid chaperone which is involved in rearangement of nucleic acid secondary structure during gRNA retrotranscription. Also facilitates template switch leading to recombination. As part of the polyprotein, participates in gRNA dimerization, packaging, tRNA incorporation and virion assembly. Its function is as follows. Aspartyl protease that mediates proteolytic cleavages of Gag and Gag-Pol polyproteins during or shortly after the release of the virion from the plasma membrane. Cleavages take place as an ordered, step-wise cascade to yield mature proteins. This process is called maturation. Displays maximal activity during the budding process just prior to particle release from the cell. Also cleaves Nef and Vif, probably concomitantly with viral structural proteins on maturation of virus particles. Hydrolyzes host EIF4GI and PABP1 in order to shut off the capped cellular mRNA translation. The resulting inhibition of cellular protein synthesis serves to ensure maximal viral gene expression and to evade host immune response. In terms of biological role, multifunctional enzyme that converts the viral RNA genome into dsDNA in the cytoplasm, shortly after virus entry into the cell. This enzyme displays a DNA polymerase activity that can copy either DNA or RNA templates, and a ribonuclease H (RNase H) activity that cleaves the RNA strand of RNA-DNA heteroduplexes in a partially processive 3' to 5' endonucleasic mode. Conversion of viral genomic RNA into dsDNA requires many steps. A tRNA(3)-Lys binds to the primer-binding site (PBS) situated at the 5'-end of the viral RNA. RT uses the 3' end of the tRNA primer to perform a short round of RNA-dependent minus-strand DNA synthesis. The reading proceeds through the U5 region and ends after the repeated (R) region which is present at both ends of viral RNA. The portion of the RNA-DNA heteroduplex is digested by the RNase H, resulting in a ssDNA product attached to the tRNA primer. This ssDNA/tRNA hybridizes with the identical R region situated at the 3' end of viral RNA. This template exchange, known as minus-strand DNA strong stop transfer, can be either intra- or intermolecular. RT uses the 3' end of this newly synthesized short ssDNA to perform the RNA-dependent minus-strand DNA synthesis of the whole template. RNase H digests the RNA template except for two polypurine tracts (PPTs) situated at the 5'-end and near the center of the genome. It is not clear if both polymerase and RNase H activities are simultaneous. RNase H probably can proceed both in a polymerase-dependent (RNA cut into small fragments by the same RT performing DNA synthesis) and a polymerase-independent mode (cleavage of remaining RNA fragments by free RTs). Secondly, RT performs DNA-directed plus-strand DNA synthesis using the PPTs that have not been removed by RNase H as primers. PPTs and tRNA primers are then removed by RNase H. The 3' and 5' ssDNA PBS regions hybridize to form a circular dsDNA intermediate. Strand displacement synthesis by RT to the PBS and PPT ends produces a blunt ended, linear dsDNA copy of the viral genome that includes long terminal repeats (LTRs) at both ends. Catalyzes viral DNA integration into the host chromosome, by performing a series of DNA cutting and joining reactions. This enzyme activity takes place after virion entry into a cell and reverse transcription of the RNA genome in dsDNA. The first step in the integration process is 3' processing. This step requires a complex comprising the viral genome, matrix protein, Vpr and integrase. This complex is called the pre-integration complex (PIC). The integrase protein removes 2 nucleotides from each 3' end of the viral DNA, leaving recessed CA OH's at the 3' ends. In the second step, the PIC enters cell nucleus. This process is mediated through integrase and Vpr proteins, and allows the virus to infect a non dividing cell. This ability to enter the nucleus is specific of lentiviruses, other retroviruses cannot and rely on cell division to access cell chromosomes. In the third step, termed strand transfer, the integrase protein joins the previously processed 3' ends to the 5' ends of strands of target cellular DNA at the site of integration. The 5'-ends are produced by integrase-catalyzed staggered cuts, 5 bp apart. A Y-shaped, gapped, recombination intermediate results, with the 5'-ends of the viral DNA strands and the 3' ends of target DNA strands remaining unjoined, flanking a gap of 5 bp. The last step is viral DNA integration into host chromosome. This involves host DNA repair synthesis in which the 5 bp gaps between the unjoined strands are filled in and then ligated. Since this process occurs at both cuts flanking the HIV genome, a 5 bp duplication of host DNA is produced at the ends of HIV-1 integration. Alternatively, Integrase may catalyze the excision of viral DNA just after strand transfer, this is termed disintegration. In Human immunodeficiency virus type 2 subtype A (isolate ST) (HIV-2), this protein is Gag-Pol polyprotein (gag-pol).